We begin with the raw amino-acid sequence, 1390 residues long: DNA-directed RNA polymerase subunit beta (1390 aa).

This sequence belongs to the RNA polymerase beta chain family. The RNAP catalytic core consists of 2 alpha, 1 beta, 1 beta' and 1 omega subunit. When a sigma factor is associated with the core the holoenzyme is formed, which can initiate transcription.

It carries out the reaction RNA(n) + a ribonucleoside 5'-triphosphate = RNA(n+1) + diphosphate. DNA-dependent RNA polymerase catalyzes the transcription of DNA into RNA using the four ribonucleoside triphosphates as substrates. This Mycoplasma genitalium (strain ATCC 33530 / DSM 19775 / NCTC 10195 / G37) (Mycoplasmoides genitalium) protein is DNA-directed RNA polymerase subunit beta.